Consider the following 493-residue polypeptide: Guanosine-5'-triphosphate,3'-diphosphate pyrophosphatase (493 aa).

This sequence belongs to the GppA/Ppx family. GppA subfamily.

The catalysed reaction is guanosine 3'-diphosphate 5'-triphosphate + H2O = guanosine 3',5'-bis(diphosphate) + phosphate + H(+). Its pathway is purine metabolism; ppGpp biosynthesis; ppGpp from GTP: step 2/2. Catalyzes the conversion of pppGpp to ppGpp. Guanosine pentaphosphate (pppGpp) is a cytoplasmic signaling molecule which together with ppGpp controls the 'stringent response', an adaptive process that allows bacteria to respond to amino acid starvation, resulting in the coordinated regulation of numerous cellular activities. This chain is Guanosine-5'-triphosphate,3'-diphosphate pyrophosphatase, found in Salmonella agona (strain SL483).